A 269-amino-acid chain; its full sequence is 5'-nucleotidase SurE (269 aa).

A divalent metal cation is bound by residues Asp-11, Asp-12, Ser-43, and Asn-101.

Belongs to the SurE nucleotidase family. It depends on a divalent metal cation as a cofactor.

The protein localises to the cytoplasm. The catalysed reaction is a ribonucleoside 5'-phosphate + H2O = a ribonucleoside + phosphate. Functionally, nucleotidase that shows phosphatase activity on nucleoside 5'-monophosphates. This chain is 5'-nucleotidase SurE, found in Prochlorococcus marinus (strain MIT 9211).